The following is a 102-amino-acid chain: NADH-quinone oxidoreductase subunit K (102 aa).

A run of 3 helical transmembrane segments spans residues 5–25 (LGHF…GIFL), 31–51 (IVLL…FVAF), and 62–82 (IFVF…LALL).

Belongs to the complex I subunit 4L family. In terms of assembly, NDH-1 is composed of 14 different subunits. Subunits NuoA, H, J, K, L, M, N constitute the membrane sector of the complex.

The protein localises to the cell inner membrane. The catalysed reaction is a quinone + NADH + 5 H(+)(in) = a quinol + NAD(+) + 4 H(+)(out). NDH-1 shuttles electrons from NADH, via FMN and iron-sulfur (Fe-S) centers, to quinones in the respiratory chain. The immediate electron acceptor for the enzyme in this species is believed to be ubiquinone. Couples the redox reaction to proton translocation (for every two electrons transferred, four hydrogen ions are translocated across the cytoplasmic membrane), and thus conserves the redox energy in a proton gradient. The chain is NADH-quinone oxidoreductase subunit K from Variovorax paradoxus (strain S110).